A 454-amino-acid polypeptide reads, in one-letter code: UPF0210 protein EUBREC_1565 (454 aa).

This sequence belongs to the UPF0210 family. Homodimer.

In Agathobacter rectalis (strain ATCC 33656 / DSM 3377 / JCM 17463 / KCTC 5835 / VPI 0990) (Eubacterium rectale), this protein is UPF0210 protein EUBREC_1565.